The following is a 288-amino-acid chain: Coiled-coil domain-containing protein 190 (288 aa).

Residues 16–69 (LERKSARQAEARLSLRLQRLEIICLYHVKSLAREQRQLQKELQRLQQDIIKKRF) adopt a coiled-coil conformation. Positions 141–235 (GERTSCFKEG…SSVDYAGSFK (95 aa)) are disordered. Basic and acidic residues predominate over residues 177–188 (HDQELSTNKTED). The segment covering 203–213 (ANETRSENASQ) has biased composition (polar residues).

In Mus musculus (Mouse), this protein is Coiled-coil domain-containing protein 190 (Ccdc190).